The primary structure comprises 370 residues: tRNA-specific 2-thiouridylase MnmA (370 aa).

ATP-binding positions include 7-14 (GISGGVDS) and methionine 33. An interaction with target base in tRNA region spans residues 104-106 (NPD). The active-site Nucleophile is cysteine 109. Cysteine 109 and cysteine 208 are disulfide-bonded. Glycine 134 contributes to the ATP binding site. The interval 158-160 (KDQ) is interaction with tRNA. Cysteine 208 functions as the Cysteine persulfide intermediate in the catalytic mechanism.

It belongs to the MnmA/TRMU family.

It localises to the cytoplasm. The enzyme catalyses S-sulfanyl-L-cysteinyl-[protein] + uridine(34) in tRNA + AH2 + ATP = 2-thiouridine(34) in tRNA + L-cysteinyl-[protein] + A + AMP + diphosphate + H(+). Functionally, catalyzes the 2-thiolation of uridine at the wobble position (U34) of tRNA, leading to the formation of s(2)U34. The polypeptide is tRNA-specific 2-thiouridylase MnmA (Malacoplasma penetrans (strain HF-2) (Mycoplasma penetrans)).